The primary structure comprises 88 residues: Metastasis-suppressor KiSS-1 (88 aa).

The segment covering 1–13 (SVENSRPTGQQLE) has biased composition (polar residues). The disordered stretch occupies residues 1–88 (SVENSRPTGQ…REKDLPNYNW (88 aa)). The segment covering 33 to 55 (SATARLSRRGASLSSPAESSGSP) has biased composition (low complexity). The span at 78 to 88 (QREKDLPNYNW) shows a compositional bias: basic and acidic residues. Tyr-86 bears the Phosphotyrosine mark.

Belongs to the KISS1 family. As to expression, in the hypothalamus, expression increases with puberty in both male and female monkeys. Robust expression in the region of the arcuate nucleus (ARC).

Its subcellular location is the secreted. Its function is as follows. Metastasis suppressor protein. May regulate events downstream of cell-matrix adhesion, perhaps involving cytoskeletal reorganization. Generates a C-terminally amidated peptide, metastin which functions as the endogenous ligand of the G-protein coupled receptor GPR54. The receptor is essential for normal gonadotropin-released hormone physiology and for puberty. The hypothalamic KiSS1/GPR54 system is a pivotal factor in central regulation of the gonadotropic axis at puberty and in adulthood. The sequence is that of Metastasis-suppressor KiSS-1 (KISS1) from Macaca mulatta (Rhesus macaque).